A 115-amino-acid chain; its full sequence is NADH-ubiquinone oxidoreductase chain 3 (115 aa).

Transmembrane regions (helical) follow at residues 3-23 (LMLTLFTNATLASLLILIAFW), 55-75 (FFLVAITFLLFDLEIALLLPL), and 87-107 (VLFMALALITLLALSLAYEWI).

This sequence belongs to the complex I subunit 3 family. As to quaternary structure, core subunit of respiratory chain NADH dehydrogenase (Complex I) which is composed of 45 different subunits. Interacts with TMEM186. Interacts with TMEM242.

The protein localises to the mitochondrion inner membrane. The catalysed reaction is a ubiquinone + NADH + 5 H(+)(in) = a ubiquinol + NAD(+) + 4 H(+)(out). Functionally, core subunit of the mitochondrial membrane respiratory chain NADH dehydrogenase (Complex I) which catalyzes electron transfer from NADH through the respiratory chain, using ubiquinone as an electron acceptor. Essential for the catalytic activity of complex I. The chain is NADH-ubiquinone oxidoreductase chain 3 from Dugong dugon (Dugong).